A 457-amino-acid polypeptide reads, in one-letter code: Acetylcholine receptor subunit alpha-1-A (457 aa).

The first 20 residues, 1-20 (MDFVLTRLILLFLAATIIYS), serve as a signal peptide directing secretion. Residues 21 to 230 (SEDESRLIND…ITYHFLLQRL (210 aa)) lie on the Extracellular side of the membrane. Intrachain disulfides connect Cys-148-Cys-162 and Cys-212-Cys-213. A glycan (N-linked (GlcNAc...) asparagine) is linked at Asn-161. 3 helical membrane-spanning segments follow: residues 231–255 (PLYFIVNVVIPCLLFSFLTGLVFYL), 263–281 (ITLSVSVLLSLVVFLLVIV), and 297–316 (YMLFTMVFVIASIVITVIVI). The Cytoplasmic segment spans residues 317-428 (NTHHRSPSTH…WKFVAMVLDH (112 aa)). The chain crosses the membrane as a helical span at residues 429 to 447 (LLLAVFMIVCIIGTLAIFA).

This sequence belongs to the ligand-gated ion channel (TC 1.A.9) family. Acetylcholine receptor (TC 1.A.9.1) subfamily. Alpha-1/CHRNA1 sub-subfamily. In terms of assembly, one of the alpha chains that assemble within the acetylcholine receptor, a pentamer of two alpha chains, a beta, a delta, and a gamma or epsilon chains. Oocytes.

Its subcellular location is the postsynaptic cell membrane. It localises to the cell membrane. It carries out the reaction K(+)(in) = K(+)(out). The enzyme catalyses Na(+)(in) = Na(+)(out). Its function is as follows. Upon acetylcholine binding, the AChR responds by an extensive change in conformation that affects all subunits and leads to opening of an ion-conducting channel across the plasma membrane. The chain is Acetylcholine receptor subunit alpha-1-A (chrna1-a) from Xenopus laevis (African clawed frog).